The chain runs to 990 residues: DNA ligase 4 (990 aa).

The interval 57-84 is disordered; it reads TQKKGRQPPGPRRKAGPHGHSNLSPHEA. ATP-binding residues include Glu-324, Lys-326, Leu-327, Arg-331, Glu-394, Phe-436, Glu-496, Lys-501, Lys-518, and Lys-520. Lys-326 acts as the N6-AMP-lysine intermediate in catalysis. Glu-394 contacts Mg(2+). Glu-496 serves as a coordination point for Mg(2+). 2 BRCT domains span residues 728–821 and 900–989; these read PQSK…LPYL and YMFS…RYQW.

The protein belongs to the ATP-dependent DNA ligase family. Mg(2+) serves as cofactor.

It is found in the nucleus. It carries out the reaction ATP + (deoxyribonucleotide)n-3'-hydroxyl + 5'-phospho-(deoxyribonucleotide)m = (deoxyribonucleotide)n+m + AMP + diphosphate.. Functionally, DNA ligase involved in DNA non-homologous end joining (NHEJ); required for double-strand break (DSB) repair. The sequence is that of DNA ligase 4 (LIG4) from Phaeosphaeria nodorum (strain SN15 / ATCC MYA-4574 / FGSC 10173) (Glume blotch fungus).